The sequence spans 296 residues: GTPase Era (296 aa).

The region spanning 3-170 (KSGFVTIVGR…KELMFKYIPE (168 aa)) is the Era-type G domain. The G1 stretch occupies residues 11–18 (GRPNVGKS). 11–18 (GRPNVGKS) is a GTP binding site. Residues 37–41 (QTTRN) are G2. The segment at 58-61 (DTPG) is G3. GTP contacts are provided by residues 58-62 (DTPGI) and 120-123 (NKID). The segment at 120–123 (NKID) is G4. The G5 stretch occupies residues 149-151 (ISA). Residues 201–278 (LSEEVPHGIA…YIRLWVKVKE (78 aa)) enclose the KH type-2 domain.

Belongs to the TRAFAC class TrmE-Era-EngA-EngB-Septin-like GTPase superfamily. Era GTPase family. As to quaternary structure, monomer.

It localises to the cytoplasm. Its subcellular location is the cell membrane. In terms of biological role, an essential GTPase that binds both GDP and GTP, with rapid nucleotide exchange. Plays a role in 16S rRNA processing and 30S ribosomal subunit biogenesis and possibly also in cell cycle regulation and energy metabolism. This is GTPase Era from Clostridium botulinum (strain Okra / Type B1).